A 136-amino-acid polypeptide reads, in one-letter code: UPF0225 protein Mpe_A2093 (136 aa).

This sequence belongs to the UPF0225 family.

This is UPF0225 protein Mpe_A2093 from Methylibium petroleiphilum (strain ATCC BAA-1232 / LMG 22953 / PM1).